The following is a 239-amino-acid chain: Probable 2-phosphosulfolactate phosphatase (239 aa).

Belongs to the ComB family. Mg(2+) is required as a cofactor.

It carries out the reaction (2R)-O-phospho-3-sulfolactate + H2O = (2R)-3-sulfolactate + phosphate. This is Probable 2-phosphosulfolactate phosphatase from Clostridium botulinum (strain 657 / Type Ba4).